Reading from the N-terminus, the 167-residue chain is S-ribosylhomocysteine lyase (167 aa).

Fe cation contacts are provided by His54, His58, and Cys128.

This sequence belongs to the LuxS family. Homodimer. It depends on Fe cation as a cofactor.

The enzyme catalyses S-(5-deoxy-D-ribos-5-yl)-L-homocysteine = (S)-4,5-dihydroxypentane-2,3-dione + L-homocysteine. Its function is as follows. Involved in the synthesis of autoinducer 2 (AI-2) which is secreted by bacteria and is used to communicate both the cell density and the metabolic potential of the environment. The regulation of gene expression in response to changes in cell density is called quorum sensing. Catalyzes the transformation of S-ribosylhomocysteine (RHC) to homocysteine (HC) and 4,5-dihydroxy-2,3-pentadione (DPD). This Sulfurimonas denitrificans (strain ATCC 33889 / DSM 1251) (Thiomicrospira denitrificans (strain ATCC 33889 / DSM 1251)) protein is S-ribosylhomocysteine lyase.